The sequence spans 84 residues: NADH-ubiquinone oxidoreductase chain 4L (84 aa).

2 helical membrane passes run 7 to 29 (ILLL…EILL) and 50 to 70 (IFSI…LSIL).

This sequence belongs to the complex I subunit 4L family.

The protein resides in the mitochondrion membrane. The enzyme catalyses a ubiquinone + NADH + 5 H(+)(in) = a ubiquinol + NAD(+) + 4 H(+)(out). Functionally, core subunit of the mitochondrial membrane respiratory chain NADH dehydrogenase (Complex I) that is believed to belong to the minimal assembly required for catalysis. Complex I functions in the transfer of electrons from NADH to the respiratory chain. The immediate electron acceptor for the enzyme is believed to be ubiquinone. The sequence is that of NADH-ubiquinone oxidoreductase chain 4L (ND4L) from Candida parapsilosis (Yeast).